An 808-amino-acid chain; its full sequence is Probable potassium transporter 3 (808 aa).

Residues 1 to 34 (MPVADCESGLSPADVTGAGAANGNPGHWRSYYRH) are Cytoplasmic-facing. Residues 35–55 (VLLLAYQSCGVVYGDLSTSPL) form a helical membrane-spanning segment. Residues 56 to 81 (YVYKSTFIIGSLRRFQDEEIVFGVFS) lie on the Extracellular side of the membrane. The helical transmembrane segment at 82–102 (LVFWTLTLIPLLKYVFIVLAA) threads the bilayer. The Cytoplasmic portion of the chain corresponds to 103–167 (DDNGEGGTFA…FLENHRKSRT (65 aa)). A helical transmembrane segment spans residues 168-188 (FLLVTVLFGASLVIGDGVLTP). The Extracellular segment spans residues 189-204 (PMSVLSSFSGLQVHST). A helical transmembrane segment spans residues 205-225 (ALTSGEVEILSCTVLVCLFMV). The Cytoplasmic segment spans residues 226–232 (QHWGTHR). The chain crosses the membrane as a helical span at residues 233 to 253 (VAFLFAPVVIVWLLLLGALGV). The Extracellular portion of the chain corresponds to 254 to 283 (YNIVVWNPRVLRALSPYYLVRFFQHTGKDG). The helical transmembrane segment at 284-304 (WISLGGILLSMTGTEAMYADL) threads the bilayer. Over 305 to 313 (GHFTAASIR) the chain is Cytoplasmic. Residues 314 to 334 (VAFVGLIYPCLVLQYMGQAAF) form a helical membrane-spanning segment. Residues 335 to 354 (LSKSPHCDIHFVFFESIPTG) are Extracellular-facing. The helical transmembrane segment at 355 to 375 (IFWPVLVIATLAAIVGSQAVI) threads the bilayer. Residues 376–406 (SATFSIVRQCTALGCFPRVKIVHTSRRIHGQ) are Cytoplasmic-facing. Residues 407 to 427 (IYSPEINWILMLLCIAVTMGL) form a helical membrane-spanning segment. Residues 428-439 (RDTTLIGNAYGM) are Extracellular-facing. The chain crosses the membrane as a helical span at residues 440-460 (ACAGVMLVTTLLMALVIVFVW). The Cytoplasmic segment spans residues 461–464 (QYSC). Residues 465 to 485 (LVAALFLVAFGVVEAVYLSAA) form a helical membrane-spanning segment. At 486-491 (LMKVPQ) the chain is on the extracellular side. A helical membrane pass occupies residues 492–512 (GGWLPLVLSLVFVAVMYVWHY). The Cytoplasmic portion of the chain corresponds to 513-808 (GTRRKHQFDV…LIEVGMIYYV (296 aa)).

The protein belongs to the HAK/KUP transporter (TC 2.A.72.3) family.

The protein localises to the membrane. Its function is as follows. High-affinity potassium transporter. This chain is Probable potassium transporter 3 (HAK3), found in Oryza sativa subsp. japonica (Rice).